The chain runs to 161 residues: RNA pyrophosphohydrolase (161 aa).

The 144-residue stretch at glycine 6 to arginine 149 folds into the Nudix hydrolase domain. Positions glycine 38 to glycine 59 match the Nudix box motif.

This sequence belongs to the Nudix hydrolase family. RppH subfamily. Requires a divalent metal cation as cofactor.

Its function is as follows. Accelerates the degradation of transcripts by removing pyrophosphate from the 5'-end of triphosphorylated RNA, leading to a more labile monophosphorylated state that can stimulate subsequent ribonuclease cleavage. The sequence is that of RNA pyrophosphohydrolase from Hahella chejuensis (strain KCTC 2396).